A 127-amino-acid chain; its full sequence is Translation initiation factor 5A (127 aa).

A Hypusine modification is found at Lys35.

The protein belongs to the eIF-5A family.

It localises to the cytoplasm. In terms of biological role, functions by promoting the formation of the first peptide bond. The sequence is that of Translation initiation factor 5A from Methanococcoides burtonii (strain DSM 6242 / NBRC 107633 / OCM 468 / ACE-M).